We begin with the raw amino-acid sequence, 89 residues long: uncharacterized protein (89 aa).

An N-terminal signal peptide occupies residues 1–19 (MIVRTLLIAAALLGGTAQA).

It is found in the secreted. This is an uncharacterized protein from Pseudomonas aeruginosa (strain UCBPP-PA14).